The primary structure comprises 227 residues: Cytochrome c oxidase subunit 2 (227 aa).

The Mitochondrial intermembrane portion of the chain corresponds to 1-14 (MAYPLQLGFQDASS). A helical transmembrane segment spans residues 15-45 (PIMEELLHFHDHTLMIVFLISSLVLYIISLM). Residues 46 to 59 (LTTKLTHTSTMDAQ) are Mitochondrial matrix-facing. Residues 60–87 (EVETIWTILPAIILILIALPSLRILYMM) traverse the membrane as a helical segment. Residues 88–227 (DEINNPSLTV…HFENWTTTML (140 aa)) lie on the Mitochondrial intermembrane side of the membrane. Cu cation contacts are provided by His161, Cys196, Glu198, Cys200, His204, and Met207. Glu198 serves as a coordination point for Mg(2+).

Belongs to the cytochrome c oxidase subunit 2 family. In terms of assembly, component of the cytochrome c oxidase (complex IV, CIV), a multisubunit enzyme composed of 14 subunits. The complex is composed of a catalytic core of 3 subunits MT-CO1, MT-CO2 and MT-CO3, encoded in the mitochondrial DNA, and 11 supernumerary subunits COX4I, COX5A, COX5B, COX6A, COX6B, COX6C, COX7A, COX7B, COX7C, COX8 and NDUFA4, which are encoded in the nuclear genome. The complex exists as a monomer or a dimer and forms supercomplexes (SCs) in the inner mitochondrial membrane with NADH-ubiquinone oxidoreductase (complex I, CI) and ubiquinol-cytochrome c oxidoreductase (cytochrome b-c1 complex, complex III, CIII), resulting in different assemblies (supercomplex SCI(1)III(2)IV(1) and megacomplex MCI(2)III(2)IV(2)). Found in a complex with TMEM177, COA6, COX18, COX20, SCO1 and SCO2. Interacts with TMEM177 in a COX20-dependent manner. Interacts with COX20. Interacts with COX16. Cu cation serves as cofactor.

The protein resides in the mitochondrion inner membrane. The catalysed reaction is 4 Fe(II)-[cytochrome c] + O2 + 8 H(+)(in) = 4 Fe(III)-[cytochrome c] + 2 H2O + 4 H(+)(out). Functionally, component of the cytochrome c oxidase, the last enzyme in the mitochondrial electron transport chain which drives oxidative phosphorylation. The respiratory chain contains 3 multisubunit complexes succinate dehydrogenase (complex II, CII), ubiquinol-cytochrome c oxidoreductase (cytochrome b-c1 complex, complex III, CIII) and cytochrome c oxidase (complex IV, CIV), that cooperate to transfer electrons derived from NADH and succinate to molecular oxygen, creating an electrochemical gradient over the inner membrane that drives transmembrane transport and the ATP synthase. Cytochrome c oxidase is the component of the respiratory chain that catalyzes the reduction of oxygen to water. Electrons originating from reduced cytochrome c in the intermembrane space (IMS) are transferred via the dinuclear copper A center (CU(A)) of subunit 2 and heme A of subunit 1 to the active site in subunit 1, a binuclear center (BNC) formed by heme A3 and copper B (CU(B)). The BNC reduces molecular oxygen to 2 water molecules using 4 electrons from cytochrome c in the IMS and 4 protons from the mitochondrial matrix. This chain is Cytochrome c oxidase subunit 2 (MT-CO2), found in Tupaia glis (Common tree shrew).